Reading from the N-terminus, the 204-residue chain is Ribosome maturation factor RimP (204 aa).

The disordered stretch occupies residues 176-204 (GNFDESQFDEIEESEGEEADEAEQPPTKH). Residues 181–198 (SQFDEIEESEGEEADEAE) are compositionally biased toward acidic residues.

Belongs to the RimP family.

It localises to the cytoplasm. Required for maturation of 30S ribosomal subunits. In Cereibacter sphaeroides (strain KD131 / KCTC 12085) (Rhodobacter sphaeroides), this protein is Ribosome maturation factor RimP.